Here is a 516-residue protein sequence, read N- to C-terminus: L-amino acid oxidase bordonein-L (516 aa).

The signal sequence occupies residues 1-18 (MNVFFMFSLLFLAALGSC). Cys-28 and Cys-189 are disulfide-bonded. Residues 61–62 (MA), 81–82 (EA), Arg-89, and 103–106 (GPMR) each bind FAD. 2 residues coordinate substrate: Arg-106 and His-239. Residue Val-279 participates in FAD binding. Cys-349 and Cys-430 form a disulfide bridge. A glycan (N-linked (GlcNAc...) asparagine) is linked at Asn-379. Tyr-390 is a binding site for substrate. FAD contacts are provided by residues Glu-475 and 482 to 487 (GWIDST). 482–483 (GW) contributes to the substrate binding site.

Homodimer; non-covalently linked. It depends on FAD as a cofactor. N-glycosylated. N-glycan probably consists of the disaccharide N-acetylglucosamine-fucose (HexNAc-Fuc). As to expression, expressed by the venom gland.

It localises to the secreted. It carries out the reaction an L-alpha-amino acid + O2 + H2O = a 2-oxocarboxylate + H2O2 + NH4(+). It catalyses the reaction L-leucine + O2 + H2O = 4-methyl-2-oxopentanoate + H2O2 + NH4(+). The enzyme catalyses L-phenylalanine + O2 + H2O = 3-phenylpyruvate + H2O2 + NH4(+). The catalysed reaction is L-tryptophan + O2 + H2O = indole-3-pyruvate + H2O2 + NH4(+). It carries out the reaction L-methionine + O2 + H2O = 4-methylsulfanyl-2-oxobutanoate + H2O2 + NH4(+). It catalyses the reaction L-isoleucine + O2 + H2O = (S)-3-methyl-2-oxopentanoate + H2O2 + NH4(+). The enzyme catalyses L-arginine + O2 + H2O = 5-guanidino-2-oxopentanoate + H2O2 + NH4(+). The catalysed reaction is L-histidine + O2 + H2O = 3-(imidazol-5-yl)pyruvate + H2O2 + NH4(+). Its function is as follows. Catalyzes an oxidative deamination of predominantly hydrophobic and aromatic L-amino acids, thus producing hydrogen peroxide that may contribute to the diverse toxic effects of this enzyme. Is highly active on L-Met, L-Leu, L-Trp, and L-Phe, moderately active on L-Ile, L-His, and L-Arg, and weakly or not active on L-Gln, L-Val, L-Asn, L-Ala, L-Lys, L-Ser, L-Thr, L-Pro, L-Asp, L-Gly, L-Tyr, L-Cys and L-Glu. This enzyme exhibits diverse biological activities, such as hemorrhage, hemolysis, edema, apoptosis of vascular endothelial cells or tumor cell lines, antibacterial and antiparasitic activities, as well as regulation of platelet aggregation. Its effect on platelets is controversial, since it either induces aggregation or inhibits agonist-induced aggregation. These different effects are probably due to different experimental conditions. In vitro, the enzyme exhibits cytotoxicity against fibroblast cell line and kills Leishmania amazonensis promastigotes, intensified by substrate addition. The polypeptide is L-amino acid oxidase bordonein-L (Crotalus durissus terrificus (South American rattlesnake)).